The sequence spans 228 residues: Vacuolar-sorting protein snf7 (228 aa).

2 coiled-coil regions span residues 25–94 (ILGL…QINA) and 125–226 (EKVD…QAEM).

This sequence belongs to the SNF7 family. A component of the endosomal sorting required for transport complex III (ESCRT-III).

It is found in the cytoplasm. It localises to the endosome membrane. In terms of biological role, required for the sorting and concentration of proteins resulting in the entry of these proteins into the invaginating vesicles of the multivesicular body (MVB). Also required for the proteolytic cleavage of the transcription factor pacc-1 in response to alkaline ambient pH. This is Vacuolar-sorting protein snf7 (vsp-3) from Neurospora crassa (strain ATCC 24698 / 74-OR23-1A / CBS 708.71 / DSM 1257 / FGSC 987).